An 872-amino-acid polypeptide reads, in one-letter code: Paladin (872 aa).

The segment at 1–37 (MGTTASAAQQVPSTVPSSENVQGNGSGSSNVEDRNSL) is disordered. Gly-2 carries the N-myristoyl glycine lipid modification. A coiled-coil region spans residues 186 to 210 (RRKENLHENLHDLEKGLRAENLELA).

This sequence belongs to the paladin family.

It is found in the cytoplasm. The protein localises to the cytosol. This is Paladin (pald1) from Xenopus tropicalis (Western clawed frog).